The chain runs to 203 residues: LexA repressor (203 aa).

Residues Ile-28–Lys-47 constitute a DNA-binding region (H-T-H motif). Residues Ser-127 and Lys-164 each act as for autocatalytic cleavage activity in the active site.

This sequence belongs to the peptidase S24 family. As to quaternary structure, homodimer.

The catalysed reaction is Hydrolysis of Ala-|-Gly bond in repressor LexA.. Functionally, represses a number of genes involved in the response to DNA damage (SOS response), including recA and lexA. In the presence of single-stranded DNA, RecA interacts with LexA causing an autocatalytic cleavage which disrupts the DNA-binding part of LexA, leading to derepression of the SOS regulon and eventually DNA repair. This chain is LexA repressor, found in Leptospira interrogans serogroup Icterohaemorrhagiae serovar copenhageni (strain Fiocruz L1-130).